Reading from the N-terminus, the 544-residue chain is MTCKNTRRLYQIITTFLRYGIDEIIPDIPLTRHARLGRKALFWVRNQHKDQPFGVRLRLALQELGPVWIKLGQMLSTRRDLFEPELAEQLALLQDSVEPFDGKSARQIIEQALGGSLETWFDEFDEQALASASIAQVHTAKFNQNQPLVGKDVVIKVIRPDIEPIIKADIALMYRLASWVPRLSNDARRLRATEVVREYEKTLLDELDLTREMANAIRLRNNFENSEMLYVPEMYPDFCHKNVIVMERIYGILVSDVETLKANGTDMKLLAERGVQVFFTQVFRDSFFHADMHAGNIFVNPNHPENPQYIGIDCGIVGTLNQNDKRYLAESFVAFFNRDYRRVALMHVESGWTPADTDIDAFEQAFREVCEPIFAKPLSEISFGHVLLNLFNVAREFNMEVQPQLVLLQKTLLYIEGLGRQVYPQLDLWQTAKPFLQNWLNEQVGVKAILRDLKQRAPQFREHFAEFPEAVFNALQQQKQINFRLDELNKTLQAQGRQKSHNVRSIVSGVIILGVLWRFDDLPLWLSCGTLVTVLLVLLLQRKS.

Residues Glu-123–Ser-505 enclose the Protein kinase domain. ATP contacts are provided by residues Leu-129–Val-137 and Lys-156. Residue Asp-291 is the Proton acceptor of the active site. The chain crosses the membrane as a helical span at residues Leu-522 to Leu-540.

The protein belongs to the ABC1 family. UbiB subfamily.

Its subcellular location is the cell inner membrane. It functions in the pathway cofactor biosynthesis; ubiquinone biosynthesis [regulation]. Its function is as follows. Is probably a protein kinase regulator of UbiI activity which is involved in aerobic coenzyme Q (ubiquinone) biosynthesis. The sequence is that of Probable protein kinase UbiB from Actinobacillus pleuropneumoniae serotype 7 (strain AP76).